Here is a 283-residue protein sequence, read N- to C-terminus: uncharacterized protein (283 aa).

Residues 4-131 (RPLHAFEVVA…MGPGGAYAPD (128 aa)) enclose the FAD-binding FR-type domain.

This is an uncharacterized protein from Mycobacterium bovis (strain ATCC BAA-935 / AF2122/97).